An 89-amino-acid chain; its full sequence is Cell division topological specificity factor (89 aa).

Belongs to the MinE family.

In terms of biological role, prevents the cell division inhibition by proteins MinC and MinD at internal division sites while permitting inhibition at polar sites. This ensures cell division at the proper site by restricting the formation of a division septum at the midpoint of the long axis of the cell. The chain is Cell division topological specificity factor from Edwardsiella ictaluri (strain 93-146).